The sequence spans 893 residues: NEDD4-binding protein 1 (893 aa).

A KH-like domain is found at 59–143 (QEAVHSAKEY…IQQFVKLFES (85 aa)). Residues 213–243 (EYTQSAATGPSSARDEVVVQEDSRNKARTPV) are disordered. A compositionally biased stretch (polar residues) spans 214 to 223 (YTQSAATGPS). The span at 225-237 (ARDEVVVQEDSRN) shows a compositional bias: basic and acidic residues. A Phosphothreonine modification is found at threonine 241. Phosphoserine is present on residues serine 257, serine 269, and serine 299. Disordered regions lie at residues 273-339 (DALS…DGKD), 394-433 (RDFP…QSHT), and 472-564 (IWGS…PPLP). Composition is skewed to polar residues over residues 405 to 433 (ASQS…QSHT) and 523 to 537 (GFQQ…NNTK). Pro residues predominate over residues 551 to 564 (QPKPNYPPLSPPLP). A Phosphoserine modification is found at serine 560. The RNase NYN domain occupies 615 to 767 (LKHIVIDGSN…LGRNGPRLEE (153 aa)). Residues 793–820 (PGFRSPSTQVANNSHQPPPRIQTSSSPW) form a disordered region. A compositionally biased stretch (polar residues) spans 797-820 (SPSTQVANNSHQPPPRIQTSSSPW). The interval 846 to 893 (RSSAETSELREALLKIFPDSEQKLKIDQILAAHPYMKDLNALSALVLD) is coCUN.

It belongs to the N4BP1 family. Interacts with NEDD4. Interacts with ITCH (via WW domain 2). Post-translationally, proteolytically cleaved by CASP8 downstream of TLR3 or TLR4, leading to its inactivation. Mainly cleaved at Asp-488 by CASP8. Cleaved by caspase-like protein MALT1, leading to its inactivation. Mono- and polyubiquitinated on the CoCUN region. Monoubiquitinated by NEDD4. Polyubiquitinated, leading to its degradation by the proteasome. Sumoylated with SUMO1, abrogating polyubiquitination and subsequent degradation. Desumoylated by SENP1, leading to accumulation in PML nuclear bodies.

It localises to the cytoplasm. The protein resides in the cytosol. Its subcellular location is the nucleus. The protein localises to the nucleolus. It is found in the PML body. Its activity is regulated as follows. Proteolytic cleavage by CASP8 or MALT1 leads to its inactivation. Functionally, potent suppressor of cytokine production that acts as a regulator of innate immune signaling and inflammation. Acts as a key negative regulator of select cytokine and chemokine responses elicited by TRIF-independent Toll-like receptors (TLRs), thereby limiting inflammatory cytokine responses to minor insults. In response to more threatening pathogens, cleaved by CASP8 downstream of TLR3 or TLR4, leading to its inactivation, thereby allowing production of inflammatory cytokines. Acts as a restriction factor against some viruses: restricts viral replication by binding to mRNA viruses and mediating their degradation via its ribonuclease activity. Also acts as an inhibitor of the E3 ubiquitin-protein ligase ITCH: acts by interacting with the second WW domain of ITCH, leading to compete with ITCH's substrates and impairing ubiquitination of substrates. The sequence is that of NEDD4-binding protein 1 from Mus musculus (Mouse).